Consider the following 1720-residue polypeptide: Merozoite surface protein 1 (1720 aa).

An N-terminal signal peptide occupies residues 1–19 (MKIIFFLCSFLFFIINTQC). Positions 63–112 (ASAQSGASAQSGASAQSGASAQSGASAQSGASAQSGTSGPSGPSGTSPSS) are enriched in low complexity. Residues 63–137 (ASAQSGASAQ…PPADASDSDA (75 aa)) are disordered. Residues 113–122 (RSNTLPRSNT) show a composition bias toward polar residues. Positions 123–132 (SSGASPPADA) are enriched in low complexity. A coiled-coil region spans residues 474–519 (INNIKKKIDLEEKNINHTKEQNKKLLEDYEKSKKDYEELLEKFYEM). 4 disordered regions span residues 723 to 775 (SETT…PPKE), 908 to 955 (TGTS…SGPA), 1249 to 1278 (TPPQ…TQIP), and 1470 to 1491 (KEKF…DEQK). Over residues 743–753 (EVTEETEETEE) the composition is skewed to acidic residues. Residues 908–946 (TGTSSTSSPGNTTVNTAQSATHSNSQNQQSNASSTNTQN) are compositionally biased toward low complexity. The span at 1264–1278 (VSGSSGSTKEETQIP) shows a compositional bias: polar residues. The segment covering 1475 to 1484 (SSPPTTPPSP) has biased composition (pro residues). EGF-like domains follow at residues 1611-1651 (HQCV…VENP) and 1652-1693 (NPTC…YPLF). 6 disulfides stabilise this stretch: cysteine 1613–cysteine 1624, cysteine 1618–cysteine 1634, cysteine 1636–cysteine 1647, cysteine 1655–cysteine 1668, cysteine 1662–cysteine 1682, and cysteine 1684–cysteine 1698. The GPI-anchor amidated serine moiety is linked to residue serine 1699. A propeptide spans 1700–1720 (SSNFLGISFLLILMLILYSFI) (removed in mature form).

As to quaternary structure, forms a complex composed of subunits p83, p30, p38, and p42 which remain non-covalently associated; the complex is formed at the merozoite surface prior to egress from host erythrocytes. Forms a complex composed of processed MSP1 subunits, MSP6 subunit p36 and MSP7; the complex is formed at the merozoite surface prior to egress from host erythrocytes. Within the complex, interacts (via subunit p38) with MSP6 subunit p36 and (via subunits p83, p30 and p38) with MSP7 (via subunit p22). Forms a complex composed of MSP1, MSP6, DBLMSP1 and DBLMSP2. Within the complex, interacts (via subunit p38) with DBLMSP1 and DBLMSP2. Forms a complex composed of MSP1, and rhoptry proteins RhopH3, RAP1 and CLAG9/RhopH3. Within the complex, interacts (via subunits p42 and p19) with RhopH3 (via C-terminus). Forms a complex composed of MSP1, MSP6, MSP7, MSP9 and MSP3; within the complex, MSP6 and MSP9 mediate the binding to the host erythrocyte. Interacts (via subunits p19 and p42) with MSP9; the interaction is direct; MSP1 subunits p19 or p42, and MSP9 form a co-ligand complex that interacts with host SLC4A1/Band 3 protein. May interact with PFD6. Interacts with host spectrin. Interacts with host glycophorin GYPA in a sialic acid-independent manner. In terms of assembly, interacts with host proinflammatory cytokine S100P; the interaction blocks S100P inflammatory and chemotactic activities. As to quaternary structure, interacts with host SLC4A1/Band 3 (via 5ABC region) on the host erythrocyte surface in a sialic acid-independent manner. Post-translationally, the p190 precursor is cleaved by SUB1 prior to merozoite egress into 4 subunits p83, p30, p38, and p42 which remain non-covalently associated. SUB1-mediated proteolytic cleavage occurs in an orderly manner; the first cleavage occurs at the p30/p38 site, followed by cleavage at the p83/p30 site, in the 3D7 strain a second cleavage occurs at the N-terminus of p83, the last cleavage occurs at the p38/p42 site. The order of cleavage is essential for parasite viability. SUB1-mediated processing is essential for merozoite egress. In a second processing step during erythrocyte invasion, p42 is cleaved by SUB2 into p33 and p19; the latter remains attached to the merozoite surface via its GPI-anchor and is endocytosed during the subsequent ring stage.

The protein localises to the cell membrane. It is found in the secreted. It localises to the vacuole membrane. During the asexual blood stage, involved in merozoite egress from host erythrocytes possibly via its interaction with the host cytoskeleton protein spectrin resulting in the destabilization of the host cytoskeleton and thus leading to erythrocyte cell membrane rupture. Involved in the binding to host erythrocytes and is required for host erythrocyte invasion. Its function is as follows. By binding to host proinflammatory cytokine S100P may interfere with host immune responses. Functionally, involved in merozoite invasion of host erythrocytes. May play a role in the biogenesis and/or function of the food vacuole during the intraerythrocytic development. This is Merozoite surface protein 1 from Plasmodium falciparum (isolate 3D7).